The chain runs to 435 residues: Gamma-glutamyl phosphate reductase (435 aa).

Belongs to the gamma-glutamyl phosphate reductase family.

The protein resides in the cytoplasm. It catalyses the reaction L-glutamate 5-semialdehyde + phosphate + NADP(+) = L-glutamyl 5-phosphate + NADPH + H(+). Its pathway is amino-acid biosynthesis; L-proline biosynthesis; L-glutamate 5-semialdehyde from L-glutamate: step 2/2. Its function is as follows. Catalyzes the NADPH-dependent reduction of L-glutamate 5-phosphate into L-glutamate 5-semialdehyde and phosphate. The product spontaneously undergoes cyclization to form 1-pyrroline-5-carboxylate. The sequence is that of Gamma-glutamyl phosphate reductase from Parasynechococcus marenigrum (strain WH8102).